The chain runs to 623 residues: Bifunctional dihydrofolate reductase-thymidylate synthase (623 aa).

The DHFR domain occupies 9–237; the sequence is DIYAICACCK…TTLDFLVYSK (229 aa). 13-14 contributes to the substrate binding site; that stretch reads IC. NADP(+) is bound by residues A15 and 38-44; that span reads GLGNKGT. D53 provides a ligand contact to substrate. Tandem repeats lie at residues 88 to 91, 94 to 97, and 100 to 103. A 3 X 4 AA repeats of G-G-D-N region spans residues 88-103; the sequence is GGDNTSGGDNTHGGDN. NADP(+)-binding positions include 115–117, 137–139, and D153; these read RSS and SKT. Substrate is bound by residues I173, Y179, and T194. 174–181 is a binding site for NADP(+); that stretch reads GGAQVYRE. Residues 263-309 are disordered; sequence TAMRRNVAPRTAAPPMGPHSRANGERAPPRARARRTTPRQRKTTSCT. Over residues 291 to 304 the composition is skewed to basic residues; it reads PRARARRTTPRQRK. The segment at 337–623 is thymidylate synthase; it reads QHPEYQYLGI…HDKITMEMAA (287 aa). R360 contributes to the dUMP binding site. Residue C505 is part of the active site. DUMP contacts are provided by residues H506, 524–528, N536, and 566–568; these read QRSCD and HVY.

It in the N-terminal section; belongs to the dihydrofolate reductase family. In the C-terminal section; belongs to the thymidylate synthase family. As to quaternary structure, homodimer.

The enzyme catalyses (6S)-5,6,7,8-tetrahydrofolate + NADP(+) = 7,8-dihydrofolate + NADPH + H(+). The catalysed reaction is dUMP + (6R)-5,10-methylene-5,6,7,8-tetrahydrofolate = 7,8-dihydrofolate + dTMP. It participates in cofactor biosynthesis; tetrahydrofolate biosynthesis; 5,6,7,8-tetrahydrofolate from 7,8-dihydrofolate: step 1/1. Its function is as follows. Bifunctional enzyme. Involved in de novo dTMP biosynthesis. Key enzyme in folate metabolism. Catalyzes an essential reaction for de novo glycine and purine synthesis, DNA precursor synthesis, and for the conversion of dUMP to dTMP. The chain is Bifunctional dihydrofolate reductase-thymidylate synthase from Plasmodium vivax.